The primary structure comprises 757 residues: RNA-directed RNA polymerase catalytic subunit (757 aa).

The disordered stretch occupies residues S50–Y82. 2 short sequence motifs (nuclear localization signal) span residues R187 to V195 and R203 to S216. A promoter-binding site region spans residues R249–E256. Residues V286–Y483 enclose the RdRp catalytic domain.

It belongs to the influenza viruses polymerase PB1 family. In terms of assembly, influenza RNA polymerase is composed of three subunits: PB1, PB2 and PA. Interacts (via N-terminus) with PA (via C-terminus). Interacts (via C-terminus) with PB2 (via N-terminus); this interaction is essential for transcription initiation. Interacts (via C-terminus) with human PKP2 (via N-terminus); the interaction competitively inhibits the interaction between the RNA polymerase subunits PB1 and PB2. Phosphorylated by host PRKCA.

Its subcellular location is the host nucleus. It is found in the host cytoplasm. It carries out the reaction RNA(n) + a ribonucleoside 5'-triphosphate = RNA(n+1) + diphosphate. Its function is as follows. RNA-dependent RNA polymerase which is responsible for replication and transcription of virus RNA segments. The transcription of viral mRNAs occurs by a unique mechanism called cap-snatching. 5' methylated caps of cellular mRNAs are cleaved after 10-13 nucleotides by PA. In turn, these short capped RNAs are used as primers by PB1 for transcription of viral mRNAs. During virus replication, PB1 initiates RNA synthesis and copy vRNA into complementary RNA (cRNA) which in turn serves as a template for the production of more vRNAs. The sequence is that of RNA-directed RNA polymerase catalytic subunit from Influenza A virus (strain A/Beijing/11/1956 H1N1).